A 120-amino-acid polypeptide reads, in one-letter code: Large ribosomal subunit protein uL22 (120 aa).

The protein belongs to the universal ribosomal protein uL22 family. In terms of assembly, part of the 50S ribosomal subunit.

This protein binds specifically to 23S rRNA; its binding is stimulated by other ribosomal proteins, e.g. L4, L17, and L20. It is important during the early stages of 50S assembly. It makes multiple contacts with different domains of the 23S rRNA in the assembled 50S subunit and ribosome. Functionally, the globular domain of the protein is located near the polypeptide exit tunnel on the outside of the subunit, while an extended beta-hairpin is found that lines the wall of the exit tunnel in the center of the 70S ribosome. In Corynebacterium efficiens (strain DSM 44549 / YS-314 / AJ 12310 / JCM 11189 / NBRC 100395), this protein is Large ribosomal subunit protein uL22.